A 210-amino-acid chain; its full sequence is Pyridoxine/pyridoxamine 5'-phosphate oxidase (210 aa).

Residues 7-10 (RDEY) and lysine 65 each bind substrate. FMN-binding positions include 60–65 (RMVLLK), 75–76 (FT), arginine 81, lysine 82, and glutamine 104. The substrate site is built by tyrosine 122, arginine 126, and serine 130. Residues 139–140 (QS) and tryptophan 183 each bind FMN. A substrate-binding site is contributed by 189–191 (RLH). Arginine 193 serves as a coordination point for FMN.

Belongs to the pyridoxamine 5'-phosphate oxidase family. Homodimer. It depends on FMN as a cofactor.

It carries out the reaction pyridoxamine 5'-phosphate + O2 + H2O = pyridoxal 5'-phosphate + H2O2 + NH4(+). The enzyme catalyses pyridoxine 5'-phosphate + O2 = pyridoxal 5'-phosphate + H2O2. It functions in the pathway cofactor metabolism; pyridoxal 5'-phosphate salvage; pyridoxal 5'-phosphate from pyridoxamine 5'-phosphate: step 1/1. It participates in cofactor metabolism; pyridoxal 5'-phosphate salvage; pyridoxal 5'-phosphate from pyridoxine 5'-phosphate: step 1/1. In terms of biological role, catalyzes the oxidation of either pyridoxine 5'-phosphate (PNP) or pyridoxamine 5'-phosphate (PMP) into pyridoxal 5'-phosphate (PLP). This is Pyridoxine/pyridoxamine 5'-phosphate oxidase from Haemophilus influenzae (strain ATCC 51907 / DSM 11121 / KW20 / Rd).